The sequence spans 219 residues: Dehydration-responsive element-binding protein 1F (219 aa).

The disordered stretch occupies residues 1 to 45; sequence MDTEDTSSASSSSVSPPSSPGGGHHHRLPPKRRAGRKKFRETRHP. The segment covering 7–16 has biased composition (low complexity); that stretch reads SSASSSSVSP. Residues 23–41 are compositionally biased toward basic residues; it reads GHHHRLPPKRRAGRKKFRE. The segment at residues 46 to 105 is a DNA-binding region (AP2/ERF); that stretch reads VYRGVRARAGGSRWVCEVREPQAQARIWLGTYPTPEMAARAHDVAAIALRGERGAELNFP. Residues 134 to 161 are disordered; the sequence is RRPPPPLALPEDPQEGTSGGGATATSGR.

The protein belongs to the AP2/ERF transcription factor family. ERF subfamily. Mostly expressed in developing seeds and apices.

The protein resides in the nucleus. Transcriptional activator that binds specifically to the DNA sequence 5'-[AG]CCGAC-3'. Binding to the C-repeat/DRE element mediates high salinity- and dehydration-inducible transcription. This Oryza sativa subsp. indica (Rice) protein is Dehydration-responsive element-binding protein 1F (DREB1F).